Consider the following 302-residue polypeptide: Arginase (302 aa).

Mn(2+)-binding residues include histidine 103, aspartate 126, histidine 128, and aspartate 130. Substrate-binding positions include 128 to 132 (HGDLN), 139 to 141 (SGN), and aspartate 180. Aspartate 229 and aspartate 231 together coordinate Mn(2+). The substrate site is built by threonine 243 and glutamate 274.

Belongs to the arginase family. It depends on Mn(2+) as a cofactor.

The enzyme catalyses L-arginine + H2O = urea + L-ornithine. It participates in nitrogen metabolism; urea cycle; L-ornithine and urea from L-arginine: step 1/1. In Staphylococcus aureus (strain MSSA476), this protein is Arginase (arg).